The sequence spans 353 residues: Photosystem II D2 protein (353 aa).

N-acetylthreonine is present on Thr-2. The residue at position 2 (Thr-2) is a Phosphothreonine. The chain crosses the membrane as a helical span at residues 41-61 (CAYFALGGWFTGTTFVTSWYT). His-118 is a binding site for chlorophyll a. Residues 125 to 141 (GFMLRQFELARSVQLRP) form a helical membrane-spanning segment. Gln-130 and Asn-143 together coordinate pheophytin a. A helical membrane pass occupies residues 153–166 (VFVSVFLIYPLGQS). His-198 serves as a coordination point for chlorophyll a. Residues 208–228 (AALLCAIHGATVENTLFEDGD) form a helical membrane-spanning segment. 2 residues coordinate a plastoquinone: His-215 and Phe-262. Residue His-215 coordinates Fe cation. A Fe cation-binding site is contributed by His-269. The helical transmembrane segment at 279-295 (GLWMSALGVVGLALNLR) threads the bilayer.

The protein belongs to the reaction center PufL/M/PsbA/D family. PSII is composed of 1 copy each of membrane proteins PsbA, PsbB, PsbC, PsbD, PsbE, PsbF, PsbH, PsbI, PsbJ, PsbK, PsbL, PsbM, PsbT, PsbX, PsbY, PsbZ, Psb30/Ycf12, at least 3 peripheral proteins of the oxygen-evolving complex and a large number of cofactors. It forms dimeric complexes. It depends on The D1/D2 heterodimer binds P680, chlorophylls that are the primary electron donor of PSII, and subsequent electron acceptors. It shares a non-heme iron and each subunit binds pheophytin, quinone, additional chlorophylls, carotenoids and lipids. There is also a Cl(-1) ion associated with D1 and D2, which is required for oxygen evolution. The PSII complex binds additional chlorophylls, carotenoids and specific lipids. as a cofactor.

It is found in the plastid. The protein localises to the chloroplast thylakoid membrane. The enzyme catalyses 2 a plastoquinone + 4 hnu + 2 H2O = 2 a plastoquinol + O2. Its function is as follows. Photosystem II (PSII) is a light-driven water:plastoquinone oxidoreductase that uses light energy to abstract electrons from H(2)O, generating O(2) and a proton gradient subsequently used for ATP formation. It consists of a core antenna complex that captures photons, and an electron transfer chain that converts photonic excitation into a charge separation. The D1/D2 (PsbA/PsbD) reaction center heterodimer binds P680, the primary electron donor of PSII as well as several subsequent electron acceptors. D2 is needed for assembly of a stable PSII complex. This Coffea arabica (Arabian coffee) protein is Photosystem II D2 protein.